The chain runs to 414 residues: Glutamyl-tRNA reductase (414 aa).

Substrate-binding positions include 49–52, Ser-108, 113–115, and Gln-119; these read TCNR and EPQ. Catalysis depends on Cys-50, which acts as the Nucleophile. Residue 188–193 coordinates NADP(+); that stretch reads GAGQTG.

Belongs to the glutamyl-tRNA reductase family. As to quaternary structure, homodimer.

It catalyses the reaction (S)-4-amino-5-oxopentanoate + tRNA(Glu) + NADP(+) = L-glutamyl-tRNA(Glu) + NADPH + H(+). It functions in the pathway porphyrin-containing compound metabolism; protoporphyrin-IX biosynthesis; 5-aminolevulinate from L-glutamyl-tRNA(Glu): step 1/2. Catalyzes the NADPH-dependent reduction of glutamyl-tRNA(Glu) to glutamate 1-semialdehyde (GSA). The polypeptide is Glutamyl-tRNA reductase (Francisella tularensis subsp. novicida (strain U112)).